Here is a 371-residue protein sequence, read N- to C-terminus: Thyroid transcription factor 1 (371 aa).

The segment at residues 161–220 (RRKRRVLFSQAQVYELERRFKQQKYLSAPEREHLASMIHLTPTQVKIWFQNHRYKMKRQA) is a DNA-binding region (homeobox). Disordered regions lie at residues 219-294 (QAKD…QQQA) and 308-342 (SGGPGLGAHPGHQPGSAGQSPDLAHHAASPAALQG). The segment covering 233-243 (SGGGGGGGGAG) has biased composition (gly residues). Low complexity-rich tracts occupy residues 244 to 253 (CPQQQQAQQQ) and 272 to 294 (AGAPAPGAGSLQGHAQQQAQQQA).

The protein belongs to the NK-2 homeobox family. Post-translationally, phosphorylated on serine residues. Thyroid, lung and CNS.

It is found in the nucleus. Its function is as follows. Transcription factor that binds and activates the promoter of thyroid specific genes such as thyroglobulin, thyroperoxidase, and thyrotropin receptor. Crucial in the maintenance of the thyroid differentiation phenotype. May play a role in lung development and surfactant homeostasis. The polypeptide is Thyroid transcription factor 1 (TITF1) (Canis lupus familiaris (Dog)).